The primary structure comprises 517 residues: Putative transporter C543.05c (517 aa).

11 helical membrane passes run 68–88, 93–113, 121–141, 155–175, 186–206, 217–237, 269–289, 311–331, 377–397, 403–423, and 449–471; these read SFGV…FALL, LCIV…YDIM, FPFL…IAIA, CEIF…QVLC, FLSI…DTVG, ILLL…FQHI, IPVG…ILFY, GFHW…ILGI, SNFI…LLVL, CVLA…NGIT, and RVVW…ITQV.

The protein belongs to the anion exchanger (TC 2.A.31) family.

Its subcellular location is the vacuole membrane. The protein is Putative transporter C543.05c of Schizosaccharomyces pombe (strain 972 / ATCC 24843) (Fission yeast).